Consider the following 243-residue polypeptide: CAVP-target protein (243 aa).

Residues 1–22 (PKPPAEAKPAAKPAAPPAAANP) are disordered. The span at 7–20 (AKPAAKPAAPPAAA) shows a compositional bias: low complexity. Residues 35-62 (SAATRIQASFRMHKNRMALKEKSIPKFS) enclose the IQ domain. 2 Ig-like C2-type domains span residues 59 to 150 (PKFS…LALE) and 151 to 243 (VPAK…VKVN).

In terms of biological role, this protein is the target of CAVP, which binds to it in a calcium-dependent manner. The polypeptide is CAVP-target protein (Branchiostoma lanceolatum (Common lancelet)).